The primary structure comprises 451 residues: COBRA-like protein 6 (451 aa).

An N-terminal signal peptide occupies residues 1–21; that stretch reads MAVLGSLLLLILAATLSVAVA. Asn30, Asn155, Asn163, Asn202, Asn227, Asn323, Asn338, and Asn357 each carry an N-linked (GlcNAc...) asparagine glycan. A lipid anchor (GPI-anchor amidated asparagine) is attached at Asn426. Positions 427-451 are cleaved as a propeptide — removed in mature form; sequence AAPPAAASLVGSAVAMAALVFFLMA.

It belongs to the COBRA family.

The protein localises to the cell membrane. In terms of biological role, involved in determining the orientation of cell expansion, probably by playing an important role in cellulose deposition. May act by recruiting cellulose synthesizing complexes to discrete positions on the cell surface. This Oryza sativa subsp. japonica (Rice) protein is COBRA-like protein 6 (BC1L7).